We begin with the raw amino-acid sequence, 93 residues long: uncharacterized protein (93 aa).

Positions 1–22 are cleaved as a signal peptide; the sequence is MSIPNLSSVTQLLSIATGLVST. The N-linked (GlcNAc...) asparagine; by host glycan is linked to N5.

This is an uncharacterized protein from Invertebrate iridescent virus 6 (IIV-6).